A 425-amino-acid chain; its full sequence is 3-deoxy-D-manno-octulosonic acid transferase (425 aa).

A helical; Signal-anchor transmembrane segment spans residues 3–23; the sequence is ELLYTALLYLIQPLIWIRLWV. Glu60 serves as the catalytic Proton acceptor. CMP contacts are provided by residues 268 to 269, 309 to 311, and 335 to 338; these read PR, MGE, and NPLE.

This sequence belongs to the glycosyltransferase group 1 family. Glycosyltransferase 30 subfamily.

It is found in the cell inner membrane. The enzyme catalyses lipid IVA (E. coli) + CMP-3-deoxy-beta-D-manno-octulosonate = alpha-Kdo-(2-&gt;6)-lipid IVA (E. coli) + CMP + H(+). The catalysed reaction is alpha-Kdo-(2-&gt;6)-lipid IVA (E. coli) + CMP-3-deoxy-beta-D-manno-octulosonate = alpha-Kdo-(2-&gt;4)-alpha-Kdo-(2-&gt;6)-lipid IVA (E. coli) + CMP + H(+). Its pathway is glycolipid biosynthesis; KDO(2)-lipid A biosynthesis; KDO(2)-lipid A from CMP-3-deoxy-D-manno-octulosonate and lipid IV(A): step 1/4. It participates in glycolipid biosynthesis; KDO(2)-lipid A biosynthesis; KDO(2)-lipid A from CMP-3-deoxy-D-manno-octulosonate and lipid IV(A): step 2/4. It functions in the pathway bacterial outer membrane biogenesis; LPS core biosynthesis. In terms of biological role, involved in lipopolysaccharide (LPS) biosynthesis. Catalyzes the transfer of two 3-deoxy-D-manno-octulosonate (Kdo) residues from CMP-Kdo to lipid IV(A), the tetraacyldisaccharide-1,4'-bisphosphate precursor of lipid A. This is 3-deoxy-D-manno-octulosonic acid transferase (waaA) from Escherichia coli O157:H7.